We begin with the raw amino-acid sequence, 467 residues long: Tubulin beta-1 chain (467 aa).

Residues Gln11, Glu69, Ser138, Gly142, Thr143, Gly144, Asn204, and Asn226 each contribute to the GTP site. Glu69 is a binding site for Mg(2+). The span at 429–444 (TIDDEEGGEEEEGGAE) shows a compositional bias: acidic residues. The segment at 429 to 448 (TIDDEEGGEEEEGGAEEEAR) is disordered.

It belongs to the tubulin family. As to quaternary structure, dimer of alpha and beta chains. A typical microtubule is a hollow water-filled tube with an outer diameter of 25 nm and an inner diameter of 15 nM. Alpha-beta heterodimers associate head-to-tail to form protofilaments running lengthwise along the microtubule wall with the beta-tubulin subunit facing the microtubule plus end conferring a structural polarity. Microtubules usually have 13 protofilaments but different protofilament numbers can be found in some organisms and specialized cells. Mg(2+) is required as a cofactor.

It localises to the cytoplasm. The protein resides in the cytoskeleton. It is found in the spindle. Its subcellular location is the nucleus. In terms of biological role, tubulin is the major constituent of microtubules, a cylinder consisting of laterally associated linear protofilaments composed of alpha- and beta-tubulin heterodimers. Microtubules grow by the addition of GTP-tubulin dimers to the microtubule end, where a stabilizing cap forms. Below the cap, tubulin dimers are in GDP-bound state, owing to GTPase activity of alpha-tubulin. In Physarum polycephalum (Slime mold), this protein is Tubulin beta-1 chain (BETA).